A 256-amino-acid polypeptide reads, in one-letter code: 1-(5-phosphoribosyl)-5-[(5-phosphoribosylamino)methylideneamino] imidazole-4-carboxamide isomerase (256 aa).

D8 acts as the Proton acceptor in catalysis. The active-site Proton donor is the D129.

This sequence belongs to the HisA/HisF family.

It localises to the cytoplasm. It catalyses the reaction 1-(5-phospho-beta-D-ribosyl)-5-[(5-phospho-beta-D-ribosylamino)methylideneamino]imidazole-4-carboxamide = 5-[(5-phospho-1-deoxy-D-ribulos-1-ylimino)methylamino]-1-(5-phospho-beta-D-ribosyl)imidazole-4-carboxamide. It participates in amino-acid biosynthesis; L-histidine biosynthesis; L-histidine from 5-phospho-alpha-D-ribose 1-diphosphate: step 4/9. The polypeptide is 1-(5-phosphoribosyl)-5-[(5-phosphoribosylamino)methylideneamino] imidazole-4-carboxamide isomerase (Synechococcus elongatus (strain ATCC 33912 / PCC 7942 / FACHB-805) (Anacystis nidulans R2)).